A 601-amino-acid chain; its full sequence is Elongation factor 4 (601 aa).

Residues R7 to K189 enclose the tr-type G domain. Residues D19 to T24 and N136 to D139 each bind GTP.

It belongs to the TRAFAC class translation factor GTPase superfamily. Classic translation factor GTPase family. LepA subfamily.

It localises to the cell inner membrane. It carries out the reaction GTP + H2O = GDP + phosphate + H(+). Required for accurate and efficient protein synthesis under certain stress conditions. May act as a fidelity factor of the translation reaction, by catalyzing a one-codon backward translocation of tRNAs on improperly translocated ribosomes. Back-translocation proceeds from a post-translocation (POST) complex to a pre-translocation (PRE) complex, thus giving elongation factor G a second chance to translocate the tRNAs correctly. Binds to ribosomes in a GTP-dependent manner. In Xanthomonas campestris pv. campestris (strain 8004), this protein is Elongation factor 4.